Reading from the N-terminus, the 150-residue chain is MRCVVYSIAKSSPLELVKIYQKQCRQFDCELELVDLFPKNTANAQKVSKKLAQKSYSLAFEPYLNPKAKNIALHPKAQRGDSFAFSKMLENHLNINFFIAGAYGFEENFLKDCQAWSLSEMTFSHEVAKIVLCEQIYRALSIIFKHPYHK.

S-adenosyl-L-methionine contacts are provided by residues Ala-100 and 118 to 123 (LSEMTF).

The protein belongs to the RNA methyltransferase RlmH family. As to quaternary structure, homodimer.

It localises to the cytoplasm. It catalyses the reaction pseudouridine(1915) in 23S rRNA + S-adenosyl-L-methionine = N(3)-methylpseudouridine(1915) in 23S rRNA + S-adenosyl-L-homocysteine + H(+). Functionally, specifically methylates the pseudouridine at position 1915 (m3Psi1915) in 23S rRNA. This is Ribosomal RNA large subunit methyltransferase H from Helicobacter pylori (strain ATCC 700392 / 26695) (Campylobacter pylori).